The following is a 595-amino-acid chain: MPRLWYSRYLAAARLRCRPLLIPEQPAVRLYQPLRRTVNTDANVHRPNEFVPLRKQLKEEAKRAKSQSRNGRGKKQVAANDGWELTVGIEIHAQLNSEAKLFSKAPTSTVAEPNTNVALFDLAFPGSQPEFQAATLLPALRAAIALNCDIQHTSRFDRKHYFYQDQPAGYQITQYYEPFARNGFIELHDYDGIAPEDGKSVRVDIKQIQLEQDTAKSHEHPPSAHFLDFNRVSHPLIEIITMPQIHSPATAAACVKKIQAILQATSAVTTGMELGGLRADVNVSVRRRDAPPGAGEYYGVQGLGQRTEIKNLSSFKAVEDAIIAERDRQIRVLESGGTVEVETRGWSIGSTETRKLRSKEGEVDYRYMPDPDLKPLVIDDGLVSALKDTLPALPDQLLSMLIGSSYGLSLEDAKPLVELDDGARLEYYQDVVDALLALRHGEDGDTANKLLGRAAANWVLHELGALHTKSDVTWHADRISAQTLAELIDQLLRKKITSSVAKQVLAMIFEGDQRPIHQLLEEENLLLRPLSRDEYIALANSLIEENPQMVAQIREKNQLGKIGWFVGQMMRLGEKGRVEAQRAEEIVRKLILGGQ.

The transit peptide at 1–72 (MPRLWYSRYL…RAKSQSRNGR (72 aa)) directs the protein to the mitochondrion.

It belongs to the GatB/GatE family. GatB subfamily. As to quaternary structure, subunit of the heterotrimeric GatCAB amidotransferase (AdT) complex, composed of A, B and C subunits.

The protein resides in the mitochondrion. It carries out the reaction L-glutamyl-tRNA(Gln) + L-glutamine + ATP + H2O = L-glutaminyl-tRNA(Gln) + L-glutamate + ADP + phosphate + H(+). Allows the formation of correctly charged Gln-tRNA(Gln) through the transamidation of misacylated Glu-tRNA(Gln) in the mitochondria. The reaction takes place in the presence of glutamine and ATP through an activated gamma-phospho-Glu-tRNA(Gln). The chain is Glutamyl-tRNA(Gln) amidotransferase subunit B, mitochondrial from Talaromyces marneffei (strain ATCC 18224 / CBS 334.59 / QM 7333) (Penicillium marneffei).